The chain runs to 90 residues: DNA-directed RNA polymerase subunit Rpo11 (90 aa).

The protein belongs to the archaeal Rpo11/eukaryotic RPB11/RPC19 RNA polymerase subunit family. As to quaternary structure, part of the RNA polymerase complex.

Its subcellular location is the cytoplasm. The enzyme catalyses RNA(n) + a ribonucleoside 5'-triphosphate = RNA(n+1) + diphosphate. Its function is as follows. DNA-dependent RNA polymerase (RNAP) catalyzes the transcription of DNA into RNA using the four ribonucleoside triphosphates as substrates. The protein is DNA-directed RNA polymerase subunit Rpo11 of Metallosphaera sedula (strain ATCC 51363 / DSM 5348 / JCM 9185 / NBRC 15509 / TH2).